Here is a 161-residue protein sequence, read N- to C-terminus: Phosphopantetheine adenylyltransferase (161 aa).

Residue Thr-11 participates in substrate binding. Residues 11-12 (TF) and His-19 each bind ATP. Positions 43, 75, and 89 each coordinate substrate. ATP is bound by residues 90–92 (GLR), Glu-100, and 125–131 (YSFLSSS).

Belongs to the bacterial CoaD family. Homohexamer. The cofactor is Mg(2+).

The protein localises to the cytoplasm. It carries out the reaction (R)-4'-phosphopantetheine + ATP + H(+) = 3'-dephospho-CoA + diphosphate. It functions in the pathway cofactor biosynthesis; coenzyme A biosynthesis; CoA from (R)-pantothenate: step 4/5. Its function is as follows. Reversibly transfers an adenylyl group from ATP to 4'-phosphopantetheine, yielding dephospho-CoA (dPCoA) and pyrophosphate. The protein is Phosphopantetheine adenylyltransferase of Listeria innocua serovar 6a (strain ATCC BAA-680 / CLIP 11262).